The sequence spans 61 residues: Small ribosomal subunit protein uS14 (61 aa).

4 residues coordinate Zn(2+): Cys24, Cys27, Cys40, and Cys43.

The protein belongs to the universal ribosomal protein uS14 family. Zinc-binding uS14 subfamily. Part of the 30S ribosomal subunit. Contacts proteins S3 and S10. Zn(2+) serves as cofactor.

Binds 16S rRNA, required for the assembly of 30S particles and may also be responsible for determining the conformation of the 16S rRNA at the A site. This Rhodopirellula baltica (strain DSM 10527 / NCIMB 13988 / SH1) protein is Small ribosomal subunit protein uS14.